The primary structure comprises 831 residues: Prickle-like protein 1 (831 aa).

Residues 14–122 (FGCQRSSTSD…TIKLLSRAVM (109 aa)) form the PET domain. LIM zinc-binding domains are found at residues 124-189 (AVCE…LLKP), 189-249 (PRCS…LYAE), and 249-313 (EYCE…EDVH). Residues 313–342 (HASDSSDSAFQSARSRDSRRSVRMGKSSRS) are disordered. A phosphoserine mark is found at serine 315, serine 591, and serine 594. Disordered regions lie at residues 663-688 (FEERGSRSHHHRRRRSRKSRSDNALN) and 763-831 (CSSS…CIIS). Residues 669–680 (RSHHHRRRRSRK) are compositionally biased toward basic residues. Residue serine 683 is modified to Phosphoserine. Over residues 815 to 831 (TKSKKKKGHKGKNCIIS) the composition is skewed to basic residues. Position 828 is a cysteine methyl ester (cysteine 828). Residue cysteine 828 is the site of S-farnesyl cysteine attachment. The propeptide at 829–831 (IIS) is removed in mature form.

It belongs to the prickle / espinas / testin family. Interacts with REST. As to expression, expressed at highest levels in placenta and at lower levels in lung, liver, kidney and pancreas. Expressed in thalamus, hippocampus, cerebral cortex, and cerebellum (in neurons rather than glia).

It localises to the nucleus membrane. The protein resides in the cytoplasm. The protein localises to the cytosol. Involved in the planar cell polarity pathway that controls convergent extension during gastrulation and neural tube closure. Convergent extension is a complex morphogenetic process during which cells elongate, move mediolaterally, and intercalate between neighboring cells, leading to convergence toward the mediolateral axis and extension along the anteroposterior axis. Necessary for nuclear localization of REST. May serve as nuclear receptor. The polypeptide is Prickle-like protein 1 (PRICKLE1) (Homo sapiens (Human)).